The primary structure comprises 357 residues: UDP-N-acetylglucosamine--N-acetylmuramyl-(pentapeptide) pyrophosphoryl-undecaprenol N-acetylglucosamine transferase (357 aa).

Residues 13-15 (TGG), Asn-122, Arg-163, Ser-191, and Gln-288 each bind UDP-N-acetyl-alpha-D-glucosamine.

This sequence belongs to the glycosyltransferase 28 family. MurG subfamily.

It is found in the cell inner membrane. It carries out the reaction di-trans,octa-cis-undecaprenyl diphospho-N-acetyl-alpha-D-muramoyl-L-alanyl-D-glutamyl-meso-2,6-diaminopimeloyl-D-alanyl-D-alanine + UDP-N-acetyl-alpha-D-glucosamine = di-trans,octa-cis-undecaprenyl diphospho-[N-acetyl-alpha-D-glucosaminyl-(1-&gt;4)]-N-acetyl-alpha-D-muramoyl-L-alanyl-D-glutamyl-meso-2,6-diaminopimeloyl-D-alanyl-D-alanine + UDP + H(+). Its pathway is cell wall biogenesis; peptidoglycan biosynthesis. Functionally, cell wall formation. Catalyzes the transfer of a GlcNAc subunit on undecaprenyl-pyrophosphoryl-MurNAc-pentapeptide (lipid intermediate I) to form undecaprenyl-pyrophosphoryl-MurNAc-(pentapeptide)GlcNAc (lipid intermediate II). The chain is UDP-N-acetylglucosamine--N-acetylmuramyl-(pentapeptide) pyrophosphoryl-undecaprenol N-acetylglucosamine transferase from Gloeobacter violaceus (strain ATCC 29082 / PCC 7421).